A 227-amino-acid polypeptide reads, in one-letter code: Urease accessory protein UreF (227 aa).

This sequence belongs to the UreF family. As to quaternary structure, ureD, UreF and UreG form a complex that acts as a GTP-hydrolysis-dependent molecular chaperone, activating the urease apoprotein by helping to assemble the nickel containing metallocenter of UreC. The UreE protein probably delivers the nickel.

The protein resides in the cytoplasm. In terms of biological role, required for maturation of urease via the functional incorporation of the urease nickel metallocenter. The protein is Urease accessory protein UreF of Actinobacillus pleuropneumoniae (Haemophilus pleuropneumoniae).